Here is a 367-residue protein sequence, read N- to C-terminus: Pyrimidine monooxygenase RutA (367 aa).

Residues 50–51 (IK), Asn-116, Glu-125, 141–142 (RY), and Ser-191 each bind FMN.

It belongs to the NtaA/SnaA/DszA monooxygenase family. RutA subfamily.

The enzyme catalyses uracil + FMNH2 + NADH + O2 = (Z)-3-ureidoacrylate + FMN + NAD(+) + H2O + H(+). The catalysed reaction is thymine + FMNH2 + NADH + O2 = (Z)-2-methylureidoacrylate + FMN + NAD(+) + H2O + H(+). Its function is as follows. Catalyzes the pyrimidine ring opening between N-3 and C-4 by an unusual flavin hydroperoxide-catalyzed mechanism, adding oxygen atoms in the process to yield ureidoacrylate peracid, that immediately reacts with FMN forming ureidoacrylate and FMN-N(5)-oxide. The FMN-N(5)-oxide reacts spontaneously with NADH to produce FMN. Requires the flavin reductase RutF to regenerate FMN in vivo. The polypeptide is Pyrimidine monooxygenase RutA (Allorhizobium ampelinum (strain ATCC BAA-846 / DSM 112012 / S4) (Agrobacterium vitis (strain S4))).